The following is a 1173-amino-acid chain: WASH complex subunit 4 (1173 aa).

The residue at position 2 (A2) is an N-acetylalanine. S7 is modified (phosphoserine). The tract at residues 705–1173 is sufficient for interaction with WASHC5; sequence KDLALFFSLN…STVSADPVVK (469 aa). Positions 1135–1161 form a coiled coil; that stretch reads RADKTAAEENQEKKEKEEETKTSNGDL. Over residues 1142 to 1155 the composition is skewed to basic and acidic residues; it reads EENQEKKEKEEETK. The tract at residues 1142 to 1173 is disordered; that stretch reads EENQEKKEKEEETKTSNGDLSDSTVSADPVVK. At T1154 the chain carries Phosphothreonine. Residues 1157-1167 are compositionally biased toward polar residues; it reads SNGDLSDSTVS.

The protein belongs to the SWIP family. In terms of assembly, component of the WASH core complex also described as WASH regulatory complex (SHRC) composed of WASH (WASHC1, WASH2P or WASH3P), WASHC2 (WASHC2A or WASHC2C), WASHC3, WASHC4 and WASHC5. The WASH core complex associates via WASHC2 with the F-actin-capping protein dimer (formed by CAPZA1, CAPZA2 or CAPZA3 and CAPZB) in a transient or substoichiometric manner which was initially described as WASH complex.

Its subcellular location is the early endosome. Its function is as follows. Acts as a component of the WASH core complex that functions as a nucleation-promoting factor (NPF) at the surface of endosomes, where it recruits and activates the Arp2/3 complex to induce actin polymerization, playing a key role in the fission of tubules that serve as transport intermediates during endosome sorting. The sequence is that of WASH complex subunit 4 from Homo sapiens (Human).